Consider the following 352-residue polypeptide: Glycerol-1-phosphate dehydrogenase [NAD(P)+] (352 aa).

NAD(+)-binding positions include 98–102 and 120–123; these read GKAID and TAAS. Asp-125 contributes to the substrate binding site. Ser-129 contacts NAD(+). Position 172 (Asp-172) interacts with substrate. Residues Asp-172 and His-252 each coordinate Zn(2+). His-256 provides a ligand contact to substrate. His-268 is a Zn(2+) binding site.

Belongs to the glycerol-1-phosphate dehydrogenase family. Requires Zn(2+) as cofactor.

The protein resides in the cytoplasm. The catalysed reaction is sn-glycerol 1-phosphate + NAD(+) = dihydroxyacetone phosphate + NADH + H(+). It carries out the reaction sn-glycerol 1-phosphate + NADP(+) = dihydroxyacetone phosphate + NADPH + H(+). It participates in membrane lipid metabolism; glycerophospholipid metabolism. Catalyzes the NAD(P)H-dependent reduction of dihydroxyacetonephosphate (DHAP or glycerone phosphate) to glycerol 1-phosphate (G1P). The G1P thus generated is used as the glycerophosphate backbone of phospholipids in the cellular membranes of Archaea. This is Glycerol-1-phosphate dehydrogenase [NAD(P)+] from Halobacterium salinarum (strain ATCC 29341 / DSM 671 / R1).